The sequence spans 847 residues: KN motif and ankyrin repeat domain-containing protein 2 (847 aa).

A disordered region spans residues 1–32; it reads MAQVLHVPAPFPGTPGQASSAAFPNKEPDPPY. Residues 1–72 are interaction with AIFM1; it reads MAQVLHVPAP…PVQRRPRLGS (72 aa). Residues S19, S83, S86, S89, and S92 each carry the phosphoserine modification. R105 is modified (omega-N-methylarginine). Residues 161-182 are disordered; the sequence is LAGVGLLPPTPRSSGLSTPVAP. T170 carries the post-translational modification Phosphothreonine. Coiled-coil stretches lie at residues 187–207 and 284–311; these read LAHV…LEEQ and EAAL…AQTQ. At T331 the chain carries Phosphothreonine. At S358 the chain carries Phosphoserine. Disordered stretches follow at residues 414-473 and 502-581; these read GAAR…GGAS and NGGY…PEEE. The segment covering 420–433 has biased composition (pro residues); it reads DPPPSPAEPSPSSP. Low complexity-rich tracts occupy residues 434–446 and 506–516; these read YPAA…APAA and ESSSEDSSTAE. S536 bears the Phosphoserine mark. Residues 610 to 647 form an ANK 0; degenerate repeat; the sequence is RELKVAYTTVLQEWLRLACRSDAHPELVRRHLVTFRAM. ANK repeat units follow at residues 662–692, 696–729, 734–763, 767–797, and 801–831; these read NGNT…QVDK, AGYS…NVNA, AGQT…DVNM, DGST…DISL, and DGST…KCSF. The interaction with NCOA1 stretch occupies residues 665 to 831; sequence TALHYSVSHA…YSRMNIKCSF (167 aa).

Interacts (non-phosphorylated form) with NCOA1; NCOA2 AND NCOA3. Interacts with AIFM1. Interacts with ARHGDIA; the interaction is direct and may regulate the interaction of ARHGDIA with RHOA, RAC1 and CDC42. Interacts (via ANK repeats 1-5) with KIF21A. Phosphorylated by casein kinase II upon estrogen stimulation. Phosphorylation induces the release by KANK2 of NCOA1 and its translocation to the nucleus where NCOA1 can activate gene transcription. As to expression, expressed by podocytes in kidney glomeruli (at protein level).

It localises to the cytoplasm. It is found in the mitochondrion. In terms of biological role, involved in transcription regulation by sequestering in the cytoplasm nuclear receptor coactivators such as NCOA1, NCOA2 and NCOA3. Involved in regulation of caspase-independent apoptosis by sequestering the proapoptotic factor AIFM1 in mitochondria. Pro-apoptotic stimuli can induce its proteasomal degradation allowing the translocation of AIFM1 to the nucleus to induce apoptosis. Involved in the negative control of vitamin D receptor signaling pathway. Involved in actin stress fibers formation through its interaction with ARHGDIA and the regulation of the Rho signaling pathway. May thereby play a role in cell adhesion and migration, regulating for instance podocytes migration during development of the kidney. Through the Rho signaling pathway may also regulate cell proliferation. This chain is KN motif and ankyrin repeat domain-containing protein 2, found in Rattus norvegicus (Rat).